The chain runs to 118 residues: Large ribosomal subunit protein uL24 (118 aa).

The protein belongs to the universal ribosomal protein uL24 family. Part of the 50S ribosomal subunit.

One of two assembly initiator proteins, it binds directly to the 5'-end of the 23S rRNA, where it nucleates assembly of the 50S subunit. Its function is as follows. One of the proteins that surrounds the polypeptide exit tunnel on the outside of the subunit. This is Large ribosomal subunit protein uL24 from Prochlorococcus marinus (strain MIT 9301).